Here is a 514-residue protein sequence, read N- to C-terminus: Beta-secretase 2 (514 aa).

The first 19 residues, 1–19, serve as a signal peptide directing secretion; that stretch reads MGALLRALLLLVLAQWLLS. Residues 20–62 constitute a propeptide that is removed on maturation; the sequence is AVPALAPAPFTLPLQVAGATNHRASAVPGLGTPELPRADGLAL. Residues 20 to 469 are Extracellular-facing; it reads AVPALAPAPF…NEPILWIVSY (450 aa). Residues 88 to 425 form the Peptidase A1 domain; it reads YYLEMLIGTP…DRAQRRVGFA (338 aa). Asp-106 is a catalytic residue. N-linked (GlcNAc...) asparagine glycosylation is present at Asn-166. Disulfide bonds link Cys-229–Cys-429, Cys-288–Cys-453, and Cys-340–Cys-389. The active site involves Asp-299. Asn-362 is a glycosylation site (N-linked (GlcNAc...) asparagine). A helical membrane pass occupies residues 470–490; the sequence is ALMSVCGAILLVLILLLLLPL. The Cytoplasmic segment spans residues 491 to 514; the sequence is HCRHAPRDPEVVNDESSLVRHRWK.

Belongs to the peptidase A1 family. Monomer. Interacts with RTN3 and RTN4. In terms of processing, undergoes autoproteolytic cleavage. Glycosylated. As to expression, high expression in pancreatic islets. Expressed at much lower levels in the pituitary, colon, and ovaries and is nearly absent from all the other tissues.

It localises to the cell membrane. Its subcellular location is the golgi apparatus. The protein localises to the endoplasmic reticulum. The protein resides in the endosome. It is found in the melanosome. It carries out the reaction Broad endopeptidase specificity. Cleaves Glu-Val-Asn-Leu-|-Asp-Ala-Glu-Phe in the Swedish variant of Alzheimer's amyloid precursor protein.. Responsible for the proteolytic processing of the amyloid precursor protein (APP). Cleaves APP, between residues 690 and 691, leading to the generation and extracellular release of beta-cleaved soluble APP, and a corresponding cell-associated C-terminal fragment which is later released by gamma-secretase. It has also been shown that it can cleave APP between residues 671 and 672. Involved in the proteolytic shedding of PMEL at early stages of melanosome biogenesis. Cleaves PMEL within the M-beta fragment to release the amyloidogenic PMEL luminal fragment containing M-alpha and a small portion of M-beta N-terminus. This is a prerequisite step for subsequent processing and assembly of PMEL fibrils into amyloid sheets. Responsible also for the proteolytic processing of CLTRN in pancreatic beta cells. This is Beta-secretase 2 (Bace2) from Mus musculus (Mouse).